A 191-amino-acid chain; its full sequence is Calcium-activated potassium channel subunit beta-1 (191 aa).

Residues 1-15 lie on the Cytoplasmic side of the membrane; that stretch reads MGKKLVMAQKRGETR. Residues 16–36 traverse the membrane as a helical segment; that stretch reads ALCLGVAMVMCAVITYYILGT. Topologically, residues 37-157 are extracellular; it reads TMLPLYQKSV…YQRLYGPQAL (121 aa). Residues N80 and N142 are each glycosylated (N-linked (GlcNAc...) asparagine). Residues 158–178 traverse the membrane as a helical segment; the sequence is LASLFWPTFLLTGGLLIIAMV. Over 179-191 the chain is Cytoplasmic; sequence KINRSLSILAAQK.

It belongs to the KCNMB (TC 8.A.14.1) family. KCNMB1 subfamily. As to quaternary structure, interacts with KCNMA1 tetramer. There are probably 4 molecules of KCMNB1 per KCNMA1 tetramer. N-glycosylated.

The protein resides in the membrane. In terms of biological role, regulatory subunit of the calcium activated potassium KCNMA1 (maxiK) channel. Modulates the calcium sensitivity and gating kinetics of KCNMA1, thereby contributing to KCNMA1 channel diversity. Increases the apparent Ca(2+)/voltage sensitivity of the KCNMA1 channel. It also modifies KCNMA1 channel kinetics and alters its pharmacological properties. It slows down the activation and the deactivation kinetics of the channel. Acts as a negative regulator of smooth muscle contraction by enhancing the calcium sensitivity to KCNMA1. Its presence is also a requirement for internal binding of the KCNMA1 channel opener dehydrosoyasaponin I (DHS-1) triterpene glycoside and for external binding of the agonist hormone 17-beta-estradiol (E2). Increases the binding activity of charybdotoxin (CTX) toxin to KCNMA1 peptide blocker by increasing the CTX association rate and decreasing the dissociation rate. The chain is Calcium-activated potassium channel subunit beta-1 (KCNMB1) from Oryctolagus cuniculus (Rabbit).